We begin with the raw amino-acid sequence, 171 residues long: Calcium channel flower homolog (171 aa).

At 1 to 31 (MSGSGAAGAAAGPAPPAQEEGMTWWYRWLCR) the chain is on the cytoplasmic side. Residues 32–52 (LAGVLGAVSCAISGLFNCVTI) traverse the membrane as a helical segment. Residues 53 to 56 (HPLN) lie on the Extracellular side of the membrane. Residues 57 to 77 (IAAGVWMIMNAFILLLCEAPF) traverse the membrane as a helical segment. Topologically, residues 78–101 (CCQFVEFANTVAEKVDRLRSWQKA) are cytoplasmic. A helical membrane pass occupies residues 102 to 122 (VFYCGMAIVPIVMSLTLTTLL). At 123–124 (GN) the chain is on the extracellular side. A helical transmembrane segment spans residues 125–141 (AIAFATGVLYGLSALGK). Over 142 to 171 (KGDAISYARIQQQRQQADEEKLAETFEGEL) the chain is Cytoplasmic.

It belongs to the calcium channel flower family. In terms of assembly, interacts with adaptor protein complex 2 (AP-2). As to expression, expressed in neurons in the brain (at protein level). Expressed in neuroblastoma cell lines (at protein level). Expressed in cytotoxic T-lymphoocytes (at protein level). Low levels of expression in various tissues including the brain, eye, heart, liver and colon. Expression in the heart is at slightly higher levels than isoform 3. Expressed in skin cells. In terms of tissue distribution, very low levels of expression in the brain, liver and eye. Detected at very low levels of expression in skin cells. As to expression, expressed in various tissues, with highest levels of expression in the brain and eye. Expressed in skin cells. Low levels of expression in the liver, colon, heart and spleen. Barely detected in the brain and liver.

Its subcellular location is the cell membrane. The protein resides in the vesicle. Functionally, transmembrane protein which mediates synaptic endocytosis and fitness-based cell culling. In response to different stimulus strengths, controls two major modes of synaptic vesicle (SV) retrieval in hippocampal neurons; Clathrin-mediated endocytosis (CME) in response to mild stimulation and activity-dependent bulk endocytosis (ADBE) in response to strong stimulation. In cytotoxic T-lymphoocytes (CTLs) facilitates calcium-dependent endocytosis of cytotoxic granules (CGs) at the immuno synapse. Different isoforms work as fitness fingerprints in 'loser' and 'winner' cells and thereby mediate win/lose decisions as part of the cell competition process. This chain is Calcium channel flower homolog (Cacfd1), found in Mus musculus (Mouse).